The sequence spans 334 residues: MTMNQGTKQPVRVAVTGAAGQIGYSLLFRIAAGDMLGKDQPVILQLLEITPALKALAGVVMELRDCAFPLLADIVTSDDPLVAFKDADYALLVGAMPRKAGMERGDLLGANGGIFKPQGEALNKVASRDVKVLVVGNPANTNALIAQQNAPDLDPKQFTAMVRLDHNRAISQLAEKTGQPVSAIKNITIWGNHSSTQYPDLSQATVNGQPALDLVDREWYEKEYIPTVAKRGAAIIEARGASSAASAASAAIDHMRDWALGTPEGEWVSMAVPSDGSYGIPEGLIYGFPVRCRNGQYEIVQGLEISDFSRQKMDATAKELEEEREEVRRLGLVK.

An NAD(+)-binding site is contributed by 17–23 (GAAGQIG). Substrate is bound by residues R98 and R104. NAD(+)-binding positions include N111, Q118, and 135–137 (VGN). Positions 137 and 168 each coordinate substrate. Catalysis depends on H193, which acts as the Proton acceptor.

This sequence belongs to the LDH/MDH superfamily. MDH type 2 family.

The enzyme catalyses (S)-malate + NAD(+) = oxaloacetate + NADH + H(+). In terms of biological role, catalyzes the reversible oxidation of malate to oxaloacetate. This is Malate dehydrogenase from Deinococcus geothermalis (strain DSM 11300 / CIP 105573 / AG-3a).